Here is a 993-residue protein sequence, read N- to C-terminus: Lateral signaling target protein 2 homolog (993 aa).

Disordered stretches follow at residues 340–449, 494–623, 759–813, and 825–902; these read DQRN…DTTD, DGYG…TVVQ, GARH…GDQE, and AVNE…PPAW. The segment covering 343 to 360 has biased composition (low complexity); that stretch reads NNNNNINNNSSSSSNSNS. Over residues 372–405 the composition is skewed to polar residues; sequence RSPSMLSLSTASPTPSHSIGSTFSAATSSTNPPV. Acidic residues predominate over residues 409–448; sequence DGDDADDDDDGDDDDEDDDDDVDDDLVGNDDSDDDDDDTT. A phosphoserine mark is found at serine 525 and serine 526. Positions 535 to 549 are enriched in polar residues; it reads SHNNTTTIKSPDSDG. Residues 559–608 are compositionally biased toward basic residues; the sequence is SRQRHSHHHHRHHHHHHRHSSHSSHSHHHQHQQHHSQPHPHRTTRSGRKR. The segment covering 759-801 has biased composition (low complexity); sequence GARHSAGASMQRNHTTIDNNNSTSSSPPDATITTTTTTTTTRS. The residue at position 808 (serine 808) is a Phosphoserine. Composition is skewed to low complexity over residues 842 to 862 and 884 to 896; these read SNTPSSASSSATSSSSEQNSP and TTATTTTTTGTGT. The FYVE-type zinc finger occupies 905–965; that stretch reads DGKAPRCMSC…VCRDCYAREI (61 aa). Zn(2+) contacts are provided by cysteine 911, cysteine 914, cysteine 927, cysteine 930, cysteine 935, cysteine 938, cysteine 957, and cysteine 960. The segment at 968-993 is disordered; sequence SGGGGGGVVQMQRQQAANRPQTASAS. Residues 978-993 are compositionally biased toward polar residues; it reads MQRQQAANRPQTASAS.

It belongs to the lst-2 family.

In terms of biological role, negative regulator of epidermal growth factor receptor (EGFR) signaling. This is Lateral signaling target protein 2 homolog from Drosophila willistoni (Fruit fly).